Reading from the N-terminus, the 194-residue chain is N-acetyltransferase (194 aa).

The N-acetyltransferase domain maps to proline 9–glutamate 173.

It belongs to the acetyltransferase family. PAT/BAR subfamily.

The chain is N-acetyltransferase (nat) from Streptomyces griseus.